Consider the following 143-residue polypeptide: Snake venom vascular endothelial growth factor toxin (143 aa).

The signal sequence occupies residues 1 to 24 (MAVYLLAVAILFCIQGWPSGTVQG). E25 is modified (pyrrolidone carboxylic acid (Glu)). Cystine bridges form between C38-C80, C69-C115, and C73-C117. The disordered stretch occupies residues 117–143 (CRPRSPGDVNDGRNPKEGEPRARFPFV).

The protein belongs to the PDGF/VEGF growth factor family. Snake venom VEGF subfamily. In terms of assembly, homodimer; disulfide-linked. Interacts with VEGF receptor-1 (FLT1) with a high affinity, whereas it binds to VEGF receptor-2 (KDR) with a low affinity. Does not bind to VEGFR-3/FLT4 and neuropilin-1 (NRP1). As to expression, expressed by the venom gland.

Its subcellular location is the secreted. In terms of biological role, snake venom VEGFs may contribute to venom dispersion and prey subjugation by inducing vascular permeability and hypotension. This protein activates the vascular endothelial growth factor receptor-1 (VEGFR-1/FLT1), and consequently promotes the proliferation and tissue factor production of endothelial cells, the neovascularization in the chicken chorioallantoic membrane, and increases vascular permeability. Also stimulates tissue-factor production and human monocyte chemotaxis. This chain is Snake venom vascular endothelial growth factor toxin, found in Protobothrops mucrosquamatus (Taiwan habu).